Reading from the N-terminus, the 188-residue chain is Ribosome-recycling factor (188 aa).

It belongs to the RRF family.

Its subcellular location is the cytoplasm. Its function is as follows. Responsible for the release of ribosomes from messenger RNA at the termination of protein biosynthesis. May increase the efficiency of translation by recycling ribosomes from one round of translation to another. In Dinoroseobacter shibae (strain DSM 16493 / NCIMB 14021 / DFL 12), this protein is Ribosome-recycling factor.